We begin with the raw amino-acid sequence, 886 residues long: Valine--tRNA ligase (886 aa).

Positions 43-53 match the 'HIGH' region motif; sequence PYPTGRMHLGH. The short motif at 528–532 is the 'KMSKS' region element; it reads KMSKS. Lys-531 is an ATP binding site.

The protein belongs to the class-I aminoacyl-tRNA synthetase family. ValS type 2 subfamily.

The protein resides in the cytoplasm. The catalysed reaction is tRNA(Val) + L-valine + ATP = L-valyl-tRNA(Val) + AMP + diphosphate. In terms of biological role, catalyzes the attachment of valine to tRNA(Val). As ValRS can inadvertently accommodate and process structurally similar amino acids such as threonine, to avoid such errors, it has a 'posttransfer' editing activity that hydrolyzes mischarged Thr-tRNA(Val) in a tRNA-dependent manner. The chain is Valine--tRNA ligase from Methanococcus maripaludis (strain DSM 14266 / JCM 13030 / NBRC 101832 / S2 / LL).